Consider the following 149-residue polypeptide: MLLPVVARAAVPAIESAIAATPGLVSRIAAAIGSKVSPSAILAAVKSNPVVAGLTLAQIGSTGYDAYQQLLENHPEVAEMLKDLSFKADEIQPDFIGNLGQYREELELVEDAARFVGGMSNLIRLRQALELDIKYYGLKMQLNDMGYRS.

Homotrimer.

The protein localises to the virion. Functionally, assembles to form an icosahedral capsid with a T=13 symmetry. Drives the penetration of the inner capsid (core) into the cytoplasm. The polypeptide is Major outer capsid protein (P8) (Pseudomonas phage phi6 (Bacteriophage phi-6)).